The primary structure comprises 112 residues: Putative membrane protein insertion efficiency factor (112 aa).

The protein belongs to the UPF0161 family.

The protein localises to the cell inner membrane. Could be involved in insertion of integral membrane proteins into the membrane. The protein is Putative membrane protein insertion efficiency factor of Bradyrhizobium diazoefficiens (strain JCM 10833 / BCRC 13528 / IAM 13628 / NBRC 14792 / USDA 110).